Reading from the N-terminus, the 162-residue chain is Transcriptional repressor NrdR (162 aa).

The segment at 1–21 (MNCPDCGNGRTRVIDTGASSD) is disordered. The segment at 3-34 (CPDCGNGRTRVIDTGASSDGASVRRRRECQRC) is a zinc-finger region. The ATP-cone domain maps to 49–139 (LQVKKRDGTI…VYKAFSEPQE (91 aa)).

It belongs to the NrdR family. It depends on Zn(2+) as a cofactor.

Functionally, negatively regulates transcription of bacterial ribonucleotide reductase nrd genes and operons by binding to NrdR-boxes. This is Transcriptional repressor NrdR from Natronomonas pharaonis (strain ATCC 35678 / DSM 2160 / CIP 103997 / JCM 8858 / NBRC 14720 / NCIMB 2260 / Gabara) (Halobacterium pharaonis).